Reading from the N-terminus, the 205-residue chain is Large ribosomal subunit protein bL21m (205 aa).

The N-terminal 39 residues, 1 to 39, are a transit peptide targeting the mitochondrion; it reads MAASSLTVTLGRLASACSHSILRPSGPGAASLWSASRRF.

This sequence belongs to the bacterial ribosomal protein bL21 family. In terms of assembly, component of the mitochondrial large ribosomal subunit (mt-LSU). Mature mammalian 55S mitochondrial ribosomes consist of a small (28S) and a large (39S) subunit. The 28S small subunit contains a 12S ribosomal RNA (12S mt-rRNA) and 30 different proteins. The 39S large subunit contains a 16S rRNA (16S mt-rRNA), a copy of mitochondrial valine transfer RNA (mt-tRNA(Val)), which plays an integral structural role, and 52 different proteins.

It is found in the mitochondrion. This Homo sapiens (Human) protein is Large ribosomal subunit protein bL21m (MRPL21).